The chain runs to 530 residues: Cytochrome P450 2U1 (530 aa).

4 consecutive transmembrane segments (helical) span residues V21–W41, V99–F119, I247–F267, and L328–L348. C476 provides a ligand contact to heme. Residues L481 to L501 traverse the membrane as a helical segment.

Belongs to the cytochrome P450 family. Heme serves as cofactor. As to expression, widely expressed. Expressed in heart, brain and liver.

It is found in the endoplasmic reticulum membrane. The protein resides in the microsome membrane. The protein localises to the mitochondrion inner membrane. The enzyme catalyses an omega-methyl-long-chain fatty acid + reduced [NADPH--hemoprotein reductase] + O2 = an omega-hydroxy-long-chain fatty acid + oxidized [NADPH--hemoprotein reductase] + H2O + H(+). It carries out the reaction (5Z,8Z,11Z,14Z)-eicosatetraenoate + reduced [NADPH--hemoprotein reductase] + O2 = 19-hydroxy-(5Z,8Z,11Z,14Z)-eicosatetraenoate + oxidized [NADPH--hemoprotein reductase] + H2O + H(+). The catalysed reaction is (5Z,8Z,11Z,14Z)-eicosatetraenoate + reduced [NADPH--hemoprotein reductase] + O2 = 20-hydroxy-(5Z,8Z,11Z,14Z)-eicosatetraenoate + oxidized [NADPH--hemoprotein reductase] + H2O + H(+). It catalyses the reaction N-[(5Z,8Z,11Z,14Z)-eicosatetraenoyl]-serotonin + reduced [NADPH--hemoprotein reductase] + O2 = 2-oxo-N-[(5Z,8Z,11Z,14Z)-eicosatetraenoyl]-serotonin + oxidized [NADPH--hemoprotein reductase] + H2O + H(+). Its function is as follows. A cytochrome P450 monooxygenase involved in the metabolism of arachidonic acid and its conjugates. Mechanistically, uses molecular oxygen inserting one oxygen atom into a substrate, and reducing the second into a water molecule, with two electrons provided by NADPH via cytochrome P450 reductase (CPR; NADPH-ferrihemoprotein reductase). Acts as an omega and omega-1 hydroxylase for arachidonic acid and possibly for other long chain fatty acids. May modulate the arachidonic acid signaling pathway and play a role in other fatty acid signaling processes. May down-regulate the biological activities of N-arachidonoyl-serotonin, an endocannabinoid that has anti-nociceptive effects through inhibition of fatty acid amide hydrolase FAAH, TRPV1 receptor and T-type calcium channels. Catalyzes C-2 oxidation of the indole ring of N-arachidonoyl-serotonin forming a less active product 2-oxo-N-arachidonoyl-serotonin. This Mus musculus (Mouse) protein is Cytochrome P450 2U1.